Consider the following 191-residue polypeptide: 2-amino-4-hydroxy-6-hydroxymethyldihydropteridine pyrophosphokinase (191 aa).

Belongs to the HPPK family.

It carries out the reaction 6-hydroxymethyl-7,8-dihydropterin + ATP = (7,8-dihydropterin-6-yl)methyl diphosphate + AMP + H(+). The protein operates within cofactor biosynthesis; tetrahydrofolate biosynthesis; 2-amino-4-hydroxy-6-hydroxymethyl-7,8-dihydropteridine diphosphate from 7,8-dihydroneopterin triphosphate: step 4/4. In terms of biological role, catalyzes the transfer of pyrophosphate from adenosine triphosphate (ATP) to 6-hydroxymethyl-7,8-dihydropterin, an enzymatic step in folate biosynthesis pathway. The protein is 2-amino-4-hydroxy-6-hydroxymethyldihydropteridine pyrophosphokinase (folK) of Mycobacterium leprae (strain TN).